A 302-amino-acid polypeptide reads, in one-letter code: Pyridoxal 5'-phosphate synthase subunit PdxS (302 aa).

D-ribose 5-phosphate is bound at residue Asp32. Residue Lys89 is the Schiff-base intermediate with D-ribose 5-phosphate of the active site. Residue Gly161 coordinates D-ribose 5-phosphate. Arg173 serves as a coordination point for D-glyceraldehyde 3-phosphate. Residues Gly222 and 243 to 244 (GS) each bind D-ribose 5-phosphate. The segment at 275–302 (IAKNPGKGMKGQANADLDEEEQLQGRGV) is disordered.

It belongs to the PdxS/SNZ family. In terms of assembly, in the presence of PdxT, forms a dodecamer of heterodimers.

It carries out the reaction aldehydo-D-ribose 5-phosphate + D-glyceraldehyde 3-phosphate + L-glutamine = pyridoxal 5'-phosphate + L-glutamate + phosphate + 3 H2O + H(+). It participates in cofactor biosynthesis; pyridoxal 5'-phosphate biosynthesis. Functionally, catalyzes the formation of pyridoxal 5'-phosphate from ribose 5-phosphate (RBP), glyceraldehyde 3-phosphate (G3P) and ammonia. The ammonia is provided by the PdxT subunit. Can also use ribulose 5-phosphate and dihydroxyacetone phosphate as substrates, resulting from enzyme-catalyzed isomerization of RBP and G3P, respectively. In Haloarcula marismortui (strain ATCC 43049 / DSM 3752 / JCM 8966 / VKM B-1809) (Halobacterium marismortui), this protein is Pyridoxal 5'-phosphate synthase subunit PdxS.